The sequence spans 113 residues: Large ribosomal subunit protein eL31B (113 aa).

It belongs to the eukaryotic ribosomal protein eL31 family. In terms of assembly, component of the large ribosomal subunit (LSU). Mature yeast ribosomes consist of a small (40S) and a large (60S) subunit. The 40S small subunit contains 1 molecule of ribosomal RNA (18S rRNA) and 33 different proteins (encoded by 57 genes). The large 60S subunit contains 3 rRNA molecules (25S, 5.8S and 5S rRNA) and 46 different proteins (encoded by 81 genes).

It is found in the cytoplasm. In terms of biological role, component of the ribosome, a large ribonucleoprotein complex responsible for the synthesis of proteins in the cell. The small ribosomal subunit (SSU) binds messenger RNAs (mRNAs) and translates the encoded message by selecting cognate aminoacyl-transfer RNA (tRNA) molecules. The large subunit (LSU) contains the ribosomal catalytic site termed the peptidyl transferase center (PTC), which catalyzes the formation of peptide bonds, thereby polymerizing the amino acids delivered by tRNAs into a polypeptide chain. The nascent polypeptides leave the ribosome through a tunnel in the LSU and interact with protein factors that function in enzymatic processing, targeting, and the membrane insertion of nascent chains at the exit of the ribosomal tunnel. The polypeptide is Large ribosomal subunit protein eL31B (Saccharomyces cerevisiae (strain ATCC 204508 / S288c) (Baker's yeast)).